The chain runs to 435 residues: Glutamyl-tRNA reductase (435 aa).

Substrate contacts are provided by residues 49 to 52 (TCNR), Ser109, 114 to 116 (ETQ), and Gln120. Cys50 (nucleophile) is an active-site residue. 189–194 (GAGEMS) contacts NADP(+).

Belongs to the glutamyl-tRNA reductase family. As to quaternary structure, homodimer.

It carries out the reaction (S)-4-amino-5-oxopentanoate + tRNA(Glu) + NADP(+) = L-glutamyl-tRNA(Glu) + NADPH + H(+). Its pathway is porphyrin-containing compound metabolism; protoporphyrin-IX biosynthesis; 5-aminolevulinate from L-glutamyl-tRNA(Glu): step 1/2. Its function is as follows. Catalyzes the NADPH-dependent reduction of glutamyl-tRNA(Glu) to glutamate 1-semialdehyde (GSA). The chain is Glutamyl-tRNA reductase from Listeria monocytogenes serotype 4b (strain F2365).